The primary structure comprises 255 residues: F-box/SPRY domain-containing protein 1 (255 aa).

Positions 3 to 51 (DPVAALCNYNVLEVIFSYLELDDLSHCSQVCKSWYHFLNDENSDVWRWH) constitute an F-box domain. Residues 61–253 (LKSDLLSSVP…VSMVYLGTPL (193 aa)) enclose the B30.2/SPRY domain.

It belongs to the FBXO45/Fsn family. Component of an E3 ubiquitin ligase complex composed of hiw and Fsn.

It localises to the synapse. It participates in protein modification; protein ubiquitination. Its function is as follows. Required in the presynaptic motoneuron to down-regulate the levels of wnd and restrain synaptic terminal growth at the neuromuscular junction (NMJ). The polypeptide is F-box/SPRY domain-containing protein 1 (Drosophila sechellia (Fruit fly)).